The chain runs to 135 residues: MAKAPVKAGKKKSFKKKEKRVVHTGVVHIQATFNNTIVTISDQEGNTISWSSAGSLGFRGSRKGTPFAAQQAAMTAANKANETGLRVVEVRVSGPGSGRESAVRALSTAGIEVRAIKDVTPIPHNGCRPPKKRRV.

It belongs to the universal ribosomal protein uS11 family. Part of the 30S ribosomal subunit. Interacts with proteins S7 and S18. Binds to IF-3.

In terms of biological role, located on the platform of the 30S subunit, it bridges several disparate RNA helices of the 16S rRNA. Forms part of the Shine-Dalgarno cleft in the 70S ribosome. This chain is Small ribosomal subunit protein uS11, found in Solibacter usitatus (strain Ellin6076).